Here is a 481-residue protein sequence, read N- to C-terminus: Matrix metalloproteinase-20 (481 aa).

An N-terminal signal peptide occupies residues 1 to 20 (MLPASGLAVLLVTALKFSTA). The propeptide occupies 21–105 (APSLPAASPR…PRCGVPDVAN (85 aa)). N64 carries an N-linked (GlcNAc...) asparagine glycan. The Cysteine switch signature appears at 96–103 (PRCGVPDV). C98 is a binding site for Zn(2+). Residues E162, A163, and D164 each coordinate Ca(2+). 2 residues coordinate Zn(2+): H174 and D176. The Ca(2+) site is built by D181, G182, R184, and T186. Position 189 (H189) interacts with Zn(2+). Residues E195, G196, G198, and D200 each contribute to the Ca(2+) site. H202 serves as a coordination point for Zn(2+). Residues D204 and E207 each coordinate Ca(2+). H224 serves as a coordination point for Zn(2+). Residue E225 is part of the active site. Zn(2+) is bound by residues H228 and H234. 4 Hemopexin repeats span residues 291 to 341 (PDLC…FPQL), 342 to 387 (MSNV…GFPR), 389 to 437 (VQRI…FSGV), and 438 to 481 (NGQI…WIGC). C294 and C481 are disulfide-bonded. N-linked (GlcNAc...) asparagine glycosylation is present at N297.

It belongs to the peptidase M10A family. Requires Zn(2+) as cofactor. Ca(2+) serves as cofactor. Post-translationally, autoactivates at least at the 105-Asn-|-Tyr-106 site. As to expression, expressed in the enamel organ.

Its subcellular location is the secreted. It localises to the extracellular space. The protein localises to the extracellular matrix. Degrades amelogenin, the major protein component of the enamel matrix and two of the macromolecules characterizing the cartilage extracellular matrix: aggrecan and the cartilage oligomeric matrix protein (COMP). May play a central role in tooth enamel formation. Cleaves aggrecan at the '360-Ser-|-Phe-361' site. This Bos taurus (Bovine) protein is Matrix metalloproteinase-20 (MMP20).